We begin with the raw amino-acid sequence, 406 residues long: Putative sodium-coupled neutral amino acid transporter 11 (406 aa).

The Cytoplasmic segment spans residues Met-1–Pro-7. A helical transmembrane segment spans residues Leu-8–Ile-28. Asn-44 carries N-linked (GlcNAc...) asparagine glycosylation. A run of 6 helical transmembrane segments spans residues Gly-48–Ile-68, Val-93–Ser-113, Leu-121–Ala-141, Ala-156–Ile-176, Met-202–Phe-222, and Val-241–Thr-263. Asn-275 carries an N-linked (GlcNAc...) asparagine glycan. Helical transmembrane passes span Val-279–Ile-299, Cys-301–Ile-321, and Ile-340–Ala-360.

The protein belongs to the amino acid/polyamine transporter 2 family.

Its subcellular location is the membrane. Functionally, putative sodium-dependent amino acid/proton antiporter. The chain is Putative sodium-coupled neutral amino acid transporter 11 (SLC38A11) from Homo sapiens (Human).